Consider the following 337-residue polypeptide: tRNA N6-adenosine threonylcarbamoyltransferase (337 aa).

Fe cation contacts are provided by His-110 and His-114. Residues 133–137, Asp-166, Gly-179, and Asn-271 each bind substrate; that span reads LVSGK. Asp-300 provides a ligand contact to Fe cation.

The protein belongs to the KAE1 / TsaD family. The cofactor is Fe(2+).

Its subcellular location is the cytoplasm. The enzyme catalyses L-threonylcarbamoyladenylate + adenosine(37) in tRNA = N(6)-L-threonylcarbamoyladenosine(37) in tRNA + AMP + H(+). Functionally, required for the formation of a threonylcarbamoyl group on adenosine at position 37 (t(6)A37) in tRNAs that read codons beginning with adenine. Is involved in the transfer of the threonylcarbamoyl moiety of threonylcarbamoyl-AMP (TC-AMP) to the N6 group of A37, together with TsaE and TsaB. TsaD likely plays a direct catalytic role in this reaction. The chain is tRNA N6-adenosine threonylcarbamoyltransferase from Buchnera aphidicola subsp. Schizaphis graminum (strain Sg).